The following is a 274-amino-acid chain: Large ribosomal subunit protein uL2cz/uL2cy (274 aa).

Disordered stretches follow at residues 1–23 (MAIH…SQVK) and 223–274 (MNPV…RRSK). Polar residues predominate over residues 7–23 (KTSTPSTRNGTVGSQVK).

Belongs to the universal ribosomal protein uL2 family. As to quaternary structure, part of the 50S ribosomal subunit.

The protein localises to the plastid. It localises to the chloroplast. This chain is Large ribosomal subunit protein uL2cz/uL2cy (rpl2-A), found in Nandina domestica (Heavenly bamboo).